Reading from the N-terminus, the 155-residue chain is MNKEQKSRLENLLEKVANVLDYKICSVNLQTNQNPIVIKIIIKKTNGDDISLDDCALFNTPASEEIENSNLLKCSYVLEISSQGVSDELTSERDFKTFKGFPVNVELNQKNSKIKFLNGLLYEKSKDYLAINIKGKIKKIPFNEVLKISLCTLKD.

It belongs to the RimP family.

It localises to the cytoplasm. Its function is as follows. Required for maturation of 30S ribosomal subunits. This chain is Ribosome maturation factor RimP, found in Prochlorococcus marinus (strain MIT 9312).